A 397-amino-acid polypeptide reads, in one-letter code: Argininosuccinate synthase (397 aa).

7 to 15 (LYSGGLDTS) is an ATP binding site. Residue Tyr83 participates in L-citrulline binding. Gly113 contributes to the ATP binding site. L-aspartate-binding residues include Thr115, Asn119, and Asp120. Asn119 contributes to the L-citrulline binding site. L-citrulline is bound by residues Arg123, Ser169, Ser178, Glu253, and Tyr265.

It belongs to the argininosuccinate synthase family. Type 1 subfamily. In terms of assembly, homotetramer.

Its subcellular location is the cytoplasm. The enzyme catalyses L-citrulline + L-aspartate + ATP = 2-(N(omega)-L-arginino)succinate + AMP + diphosphate + H(+). Its pathway is amino-acid biosynthesis; L-arginine biosynthesis; L-arginine from L-ornithine and carbamoyl phosphate: step 2/3. This Thermoplasma volcanium (strain ATCC 51530 / DSM 4299 / JCM 9571 / NBRC 15438 / GSS1) protein is Argininosuccinate synthase.